The primary structure comprises 559 residues: Leucine-rich repeat protein soc-2 (559 aa).

Positions 1 to 17 (METSKEFEFRPAKETSR) are enriched in basic and acidic residues. A disordered region spans residues 1 to 55 (METSKEFEFRPAKETSRSKSPGGIVGRLSNFARNKARHSLSEKGSNSVGGSGGSG). 20 LRR repeats span residues 74–95 (QDQR…IKEL), 97–118 (QLTE…IGQL), 120–141 (NLKK…LSSL), 143–164 (SLET…IYKI), 166–187 (SLET…IGNL), 189–210 (KLKM…IGKL), 212–233 (SLVV…IGEC), 235–257 (ALTQ…GKLT), 258–279 (NLVR…LESC), 281–302 (QLEE…LLTM), 305–326 (KIHT…GPQQ), 329–350 (PTVT…IFSK), 353–374 (RLTK…MGSW), 376–397 (SITE…IEKL), 399–420 (NLEI…IGNL), 422–443 (KLRE…IGFL), 445–466 (HLTK…IGNL), 468–489 (SLQD…IGHL), 491–513 (SLKS…LALC), and 515–536 (SLEI…ITAG).

Belongs to the SHOC2 family. As to quaternary structure, interacts with let-60.

In terms of biological role, acts as a Ras effector and participates in MAPK pathway activation. Probably acts as a scaffolding protein in a protein phosphatase complex that specifically dephosphorylates Raf kinase and stimulates Raf activity at specialized signaling complexes upon Ras activation. Required for vulval development. Involved in fluid homeostasis. Plays a role in nicotinic acetylcholine receptor (nAChR)-mediated sensitivity to nicotine. This Caenorhabditis briggsae protein is Leucine-rich repeat protein soc-2 (soc-2).